The chain runs to 140 residues: Large-conductance mechanosensitive channel (140 aa).

2 helical membrane-spanning segments follow: residues 16–36 (VIDLAVGVVIGAAFGKIVTAL) and 84–104 (INTVVQFVIIAFAIFLLVKLI).

This sequence belongs to the MscL family. In terms of assembly, homopentamer.

Its subcellular location is the cell inner membrane. Functionally, channel that opens in response to stretch forces in the membrane lipid bilayer. May participate in the regulation of osmotic pressure changes within the cell. This chain is Large-conductance mechanosensitive channel, found in Xanthomonas oryzae pv. oryzae (strain MAFF 311018).